Reading from the N-terminus, the 54-residue chain is Relaxin (54 aa).

Pyrrolidone carboxylic acid is present on Gln1. Cystine bridges form between Cys10-Cys41, Cys22-Cys54, and Cys40-Cys45.

It belongs to the insulin family. In terms of assembly, heterodimer of a B chain and an A chain linked by two disulfide bonds.

The protein localises to the secreted. Functionally, relaxin is an ovarian hormone that acts with estrogen to produce dilatation of the birth canal in many mammals. The chain is Relaxin from Balaenoptera edeni (Pigmy Bryde's whale).